The sequence spans 260 residues: Triosephosphate isomerase (260 aa).

10–12 contributes to the substrate binding site; it reads NWK. The Electrophile role is filled by His-100. The active-site Proton acceptor is Glu-172. Residues Gly-178, Ser-218, and 239–240 each bind substrate; that span reads GG.

This sequence belongs to the triosephosphate isomerase family. Homodimer.

It is found in the cytoplasm. The catalysed reaction is D-glyceraldehyde 3-phosphate = dihydroxyacetone phosphate. It functions in the pathway carbohydrate biosynthesis; gluconeogenesis. The protein operates within carbohydrate degradation; glycolysis; D-glyceraldehyde 3-phosphate from glycerone phosphate: step 1/1. In terms of biological role, involved in the gluconeogenesis. Catalyzes stereospecifically the conversion of dihydroxyacetone phosphate (DHAP) to D-glyceraldehyde-3-phosphate (G3P). The polypeptide is Triosephosphate isomerase (Corynebacterium diphtheriae (strain ATCC 700971 / NCTC 13129 / Biotype gravis)).